We begin with the raw amino-acid sequence, 155 residues long: Lipoprotein signal peptidase (155 aa).

2 helical membrane passes run 52–72 (ILQG…AGIV) and 85–105 (LGVA…DRVF). Catalysis depends on residues D111 and D129. The helical transmembrane segment at 124-144 (IFNIADSSLCVGVILLFIQML) threads the bilayer.

This sequence belongs to the peptidase A8 family.

Its subcellular location is the cell membrane. The catalysed reaction is Release of signal peptides from bacterial membrane prolipoproteins. Hydrolyzes -Xaa-Yaa-Zaa-|-(S,diacylglyceryl)Cys-, in which Xaa is hydrophobic (preferably Leu), and Yaa (Ala or Ser) and Zaa (Gly or Ala) have small, neutral side chains.. Its pathway is protein modification; lipoprotein biosynthesis (signal peptide cleavage). Its function is as follows. This protein specifically catalyzes the removal of signal peptides from prolipoproteins. The sequence is that of Lipoprotein signal peptidase from Bacillus pumilus (strain SAFR-032).